The following is a 340-amino-acid chain: Dihydroorotate dehydrogenase (quinone) (340 aa).

Residues 65–69 and T89 each bind FMN; that span reads AGADK. K69 is a binding site for substrate. Residue 114 to 118 coordinates substrate; sequence NRNGF. Residues N142 and N175 each coordinate FMN. Residue N175 participates in substrate binding. Residue S178 is the Nucleophile of the active site. N180 provides a ligand contact to substrate. FMN contacts are provided by K220 and T248. 249–250 serves as a coordination point for substrate; that stretch reads NT. FMN is bound by residues G271, G300, and 321–322; that span reads YS.

The protein belongs to the dihydroorotate dehydrogenase family. Type 2 subfamily. As to quaternary structure, monomer. FMN serves as cofactor.

It is found in the cell membrane. The enzyme catalyses (S)-dihydroorotate + a quinone = orotate + a quinol. The protein operates within pyrimidine metabolism; UMP biosynthesis via de novo pathway; orotate from (S)-dihydroorotate (quinone route): step 1/1. Its function is as follows. Catalyzes the conversion of dihydroorotate to orotate with quinone as electron acceptor. The sequence is that of Dihydroorotate dehydrogenase (quinone) from Mannheimia succiniciproducens (strain KCTC 0769BP / MBEL55E).